The following is a 236-amino-acid chain: Rab-like protein 3 (236 aa).

Residues 1–236 (MASLDRVKVL…AGTLKSLHYD (236 aa)) are small GTPase-like. GTP contacts are provided by residues 16–21 (GVGKSS), 148–150 (KLD), and 179–180 (DC).

This sequence belongs to the small GTPase superfamily. Rab family. Homodimer. Interacts with GPR89; the interaction stabilizes GPR89. Interacts with RAP1GDS1.

Required for KRAS signaling regulation and modulation of cell proliferation. Regulator of KRAS prenylation, and probably prenylation of other small GTPases. Required for lymphocyte development and function. Not required for myeloid cell development. This is Rab-like protein 3 (RABL3) from Homo sapiens (Human).